The chain runs to 542 residues: Prolyl 4-hydroxylase subunit alpha-3 (542 aa).

Positions 1–24 (MGPGARLALLALLALGGDPAAATG) are cleaved as a signal peptide. Positions 105–129 (LEATENIRALKDGYEKVEQDLPAFE) form a coiled coil. Residues 225–258 (EDALDYLAFACFQVGNVSCALSLSREFLVYSPDN) form a TPR repeat. Asn-240 is a glycosylation site (N-linked (GlcNAc...) asparagine). In terms of domain architecture, Fe2OG dioxygenase spans 420–527 (YAEYLQVVNY…KWVANKWIHE (108 aa)). 2 residues coordinate Fe cation: His-438 and Asp-440. Residue Asn-480 is glycosylated (N-linked (GlcNAc...) asparagine). His-508 provides a ligand contact to Fe cation. Position 518 (Lys-518) interacts with 2-oxoglutarate.

This sequence belongs to the P4HA family. As to quaternary structure, heterotetramer of two alpha-3 chains and two beta chains (the beta chain is the multi-functional PDI). Fe(2+) is required as a cofactor. The cofactor is L-ascorbate. N-glycosylation plays no role in the catalytic activity.

The protein resides in the endoplasmic reticulum lumen. It carries out the reaction L-prolyl-[collagen] + 2-oxoglutarate + O2 = trans-4-hydroxy-L-prolyl-[collagen] + succinate + CO2. Catalyzes the post-translational formation of 4-hydroxyproline in -Xaa-Pro-Gly- sequences in collagens and other proteins. This Mus musculus (Mouse) protein is Prolyl 4-hydroxylase subunit alpha-3 (P4ha3).